We begin with the raw amino-acid sequence, 904 residues long: Protein argonaute 4A (904 aa).

Disordered regions lie at residues 1–33 and 143–166; these read MESN…KKLS and KSSA…VRRP. The segment covering 11–21 has biased composition (pro residues); sequence LPPPPPLPPNA. A compositionally biased stretch (low complexity) spans 144–156; that stretch reads SSANGGSPGNDSP. A PAZ domain is found at 274–388; that stretch reads PVVDFLLANQ…FPIELCSLVP (115 aa). Residues 557 to 865 form the Piwi domain; that stretch reads FLLCVLAERK…AAAQVSQFIK (309 aa). The segment at 871 to 890 is disordered; the sequence is ETSSSHGGHTSAGSAPVPEL. The span at 872–885 shows a compositional bias: low complexity; sequence TSSSHGGHTSAGSA.

This sequence belongs to the argonaute family. Ago subfamily.

Probably involved in the RNA silencing pathway. May bind to short RNAs such as microRNAs (miRNAs) or short interfering RNAs (siRNAs), and represses the translation of mRNAs which are complementary to them. The protein is Protein argonaute 4A (AGO4A) of Oryza sativa subsp. japonica (Rice).